The primary structure comprises 316 residues: uncharacterized protein (316 aa).

In terms of domain architecture, HTH lacI-type spans 1–56 (MATLSDVAKKANVSKMTVSRVINHPETVTDELKKLVHSAMKELNYIPNYAARALVQ). A DNA-binding region (H-T-H motif) is located at residues 4–23 (LSDVAKKANVSKMTVSRVIN).

This is an uncharacterized protein from Bacillus subtilis (strain 168).